The primary structure comprises 197 residues: ATP-dependent Clp protease proteolytic subunit (197 aa).

Residue Ser98 is the Nucleophile of the active site. Residue His123 is part of the active site.

This sequence belongs to the peptidase S14 family. As to quaternary structure, fourteen ClpP subunits assemble into 2 heptameric rings which stack back to back to give a disk-like structure with a central cavity, resembling the structure of eukaryotic proteasomes.

The protein localises to the cytoplasm. The catalysed reaction is Hydrolysis of proteins to small peptides in the presence of ATP and magnesium. alpha-casein is the usual test substrate. In the absence of ATP, only oligopeptides shorter than five residues are hydrolyzed (such as succinyl-Leu-Tyr-|-NHMec, and Leu-Tyr-Leu-|-Tyr-Trp, in which cleavage of the -Tyr-|-Leu- and -Tyr-|-Trp bonds also occurs).. Functionally, cleaves peptides in various proteins in a process that requires ATP hydrolysis. Has a chymotrypsin-like activity. Plays a major role in the degradation of misfolded proteins. The polypeptide is ATP-dependent Clp protease proteolytic subunit (Ligilactobacillus salivarius (strain UCC118) (Lactobacillus salivarius)).